Reading from the N-terminus, the 126-residue chain is Major sperm protein 3 (126 aa).

Ala2 is subject to N-acetylalanine. The MSP domain occupies 8–125 (DIATMPAQKV…RRKNLPIEYN (118 aa)).

Sperm.

It is found in the cell projection. It localises to the pseudopodium. Its subcellular location is the cytoplasm. The protein localises to the cytoskeleton. Its function is as follows. Central component in molecular interactions underlying sperm crawling. Forms an extensive filament system that extends from sperm villipoda, along the leading edge of the pseudopod. The polypeptide is Major sperm protein 3 (MSP-3) (Globodera rostochiensis (Golden nematode worm)).